A 170-amino-acid chain; its full sequence is Large ribosomal subunit protein uL5 (170 aa).

It belongs to the universal ribosomal protein uL5 family. As to quaternary structure, part of the 50S ribosomal subunit; contacts the 5S rRNA and probably tRNA. Forms a bridge to the 30S subunit in the 70S ribosome.

This is one of the proteins that bind and probably mediate the attachment of the 5S RNA into the large ribosomal subunit, where it forms part of the central protuberance. In the 70S ribosome it contacts protein S13 of the 30S subunit (bridge B1b), connecting the 2 subunits; this bridge is implicated in subunit movement. May contact the P site tRNA; the 5S rRNA and some of its associated proteins might help stabilize positioning of ribosome-bound tRNAs. The polypeptide is Large ribosomal subunit protein uL5 (Thermoplasma volcanium (strain ATCC 51530 / DSM 4299 / JCM 9571 / NBRC 15438 / GSS1)).